A 418-amino-acid chain; its full sequence is Glucose-1-phosphate adenylyltransferase (418 aa).

Alpha-D-glucose 1-phosphate-binding positions include Tyr107, Gly172, 187–188, and Ser205; that span reads EK.

Belongs to the bacterial/plant glucose-1-phosphate adenylyltransferase family. As to quaternary structure, homotetramer.

It carries out the reaction alpha-D-glucose 1-phosphate + ATP + H(+) = ADP-alpha-D-glucose + diphosphate. It functions in the pathway glycan biosynthesis; glycogen biosynthesis. Its function is as follows. Involved in the biosynthesis of ADP-glucose, a building block required for the elongation reactions to produce glycogen. Catalyzes the reaction between ATP and alpha-D-glucose 1-phosphate (G1P) to produce pyrophosphate and ADP-Glc. The polypeptide is Glucose-1-phosphate adenylyltransferase (Gemmatimonas aurantiaca (strain DSM 14586 / JCM 11422 / NBRC 100505 / T-27)).